The primary structure comprises 417 residues: Cytochrome b-c1 complex subunit 2, mitochondrial (417 aa).

Residues 1–22 (MTRGVPRLAVAARHFSTAEAAG) constitute a mitochondrion transit peptide.

It belongs to the peptidase M16 family. UQCRC2/QCR2 subfamily. Component of the ubiquinol-cytochrome c oxidoreductase (cytochrome b-c1 complex, complex III, CIII), a multisubunit enzyme composed of 3 respiratory subunits cytochrome b, cytochrome c1 and Rieske protein, 2 core protein subunits, and additional low-molecular weight protein subunits. The complex exists as an obligatory dimer and forms supercomplexes (SCs) in the inner mitochondrial membrane with cytochrome c oxidase (complex IV, CIV).

Its subcellular location is the mitochondrion inner membrane. Its function is as follows. Component of the ubiquinol-cytochrome c oxidoreductase, a multisubunit transmembrane complex that is part of the mitochondrial electron transport chain which drives oxidative phosphorylation. The respiratory chain contains 3 multisubunit complexes succinate dehydrogenase (complex II, CII), ubiquinol-cytochrome c oxidoreductase (cytochrome b-c1 complex, complex III, CIII) and cytochrome c oxidase (complex IV, CIV), that cooperate to transfer electrons derived from NADH and succinate to molecular oxygen, creating an electrochemical gradient over the inner membrane that drives transmembrane transport and the ATP synthase. The cytochrome b-c1 complex catalyzes electron transfer from ubiquinol to cytochrome c, linking this redox reaction to translocation of protons across the mitochondrial inner membrane, with protons being carried across the membrane as hydrogens on the quinol. In the process called Q cycle, 2 protons are consumed from the matrix, 4 protons are released into the intermembrane space and 2 electrons are passed to cytochrome c. In Yarrowia lipolytica (strain CLIB 122 / E 150) (Yeast), this protein is Cytochrome b-c1 complex subunit 2, mitochondrial (QCR2).